The sequence spans 433 residues: Enolase (433 aa).

Position 167 (Q167) interacts with (2R)-2-phosphoglycerate. E209 functions as the Proton donor in the catalytic mechanism. Positions 246, 291, and 318 each coordinate Mg(2+). 4 residues coordinate (2R)-2-phosphoglycerate: K343, R372, S373, and K394. The active-site Proton acceptor is K343.

It belongs to the enolase family. As to quaternary structure, component of the RNA degradosome, a multiprotein complex involved in RNA processing and mRNA degradation. The cofactor is Mg(2+).

The protein localises to the cytoplasm. It is found in the secreted. It localises to the cell surface. The enzyme catalyses (2R)-2-phosphoglycerate = phosphoenolpyruvate + H2O. It functions in the pathway carbohydrate degradation; glycolysis; pyruvate from D-glyceraldehyde 3-phosphate: step 4/5. Catalyzes the reversible conversion of 2-phosphoglycerate (2-PG) into phosphoenolpyruvate (PEP). It is essential for the degradation of carbohydrates via glycolysis. The protein is Enolase of Vibrio vulnificus (strain YJ016).